We begin with the raw amino-acid sequence, 539 residues long: Glutamyl-tRNA(Gln) amidotransferase subunit B, mitochondrial (539 aa).

This sequence belongs to the GatB/GatE family. GatB subfamily. As to quaternary structure, subunit of the heterotrimeric GatFAB amidotransferase (AdT) complex, composed of A, B and F subunits.

Its subcellular location is the mitochondrion. The catalysed reaction is L-glutamyl-tRNA(Gln) + L-glutamine + ATP + H2O = L-glutaminyl-tRNA(Gln) + L-glutamate + ADP + phosphate + H(+). Its function is as follows. Allows the formation of correctly charged Gln-tRNA(Gln) through the transamidation of misacylated Glu-tRNA(Gln) in the mitochondria. The reaction takes place in the presence of glutamine and ATP through an activated gamma-phospho-Glu-tRNA(Gln). This Kluyveromyces lactis (strain ATCC 8585 / CBS 2359 / DSM 70799 / NBRC 1267 / NRRL Y-1140 / WM37) (Yeast) protein is Glutamyl-tRNA(Gln) amidotransferase subunit B, mitochondrial.